A 610-amino-acid chain; its full sequence is Chaperone protein DnaK (610 aa).

The residue at position 173 (Thr-173) is a Phosphothreonine; by autocatalysis. Disordered stretches follow at residues 525–544 (ENIGEEDKKSAEEKKDALKT) and 576–610 (AAQQQQQAQGANAGQNNDSTVEDAEFKEVKDDDKK). Residues 529-542 (EEDKKSAEEKKDAL) are compositionally biased toward basic and acidic residues. Low complexity predominate over residues 576–592 (AAQQQQQAQGANAGQNN). Over residues 599-610 (AEFKEVKDDDKK) the composition is skewed to basic and acidic residues.

It belongs to the heat shock protein 70 family.

In terms of biological role, acts as a chaperone. This is Chaperone protein DnaK from Staphylococcus aureus (strain Mu3 / ATCC 700698).